We begin with the raw amino-acid sequence, 527 residues long: Peptide chain release factor 3 (527 aa).

The tr-type G domain maps to 10-278 (DKRRTFAIIS…AFIEYAPAPL (269 aa)). GTP contacts are provided by residues 19–26 (SHPDAGKT), 87–91 (DTPGH), and 141–144 (NKLD).

This sequence belongs to the TRAFAC class translation factor GTPase superfamily. Classic translation factor GTPase family. PrfC subfamily.

Its subcellular location is the cytoplasm. Increases the formation of ribosomal termination complexes and stimulates activities of RF-1 and RF-2. It binds guanine nucleotides and has strong preference for UGA stop codons. It may interact directly with the ribosome. The stimulation of RF-1 and RF-2 is significantly reduced by GTP and GDP, but not by GMP. This Pelobacter propionicus (strain DSM 2379 / NBRC 103807 / OttBd1) protein is Peptide chain release factor 3.